Here is a 689-residue protein sequence, read N- to C-terminus: DNA topoisomerase 1 (689 aa).

The 111-residue stretch at 3 to 113 (DNLVIVESPA…KENRVVFNEI (111 aa)) folds into the Toprim domain. Residues E9 and D82 each contribute to the Mg(2+) site. Residues 129 to 557 (EMNLVDAQQA…FFSSFKQDVE (429 aa)) form the Topo IA-type catalytic domain. The interaction with DNA stretch occupies residues 163–168 (SAGRVQ). The O-(5'-phospho-DNA)-tyrosine intermediate role is filled by Y298. The tract at residues 328 to 357 (SKRKASGKQGDQDAHEAIRPSSTMRTPDDM) is disordered. 3 C4-type zinc fingers span residues 577-603 (CEVCGSPMVIKMGRYGKFMACSNFPDC), 617-645 (CPKCNDGDVVERKSKKNRVFYGCSKYPEC), and 658-681 (CPKCNQYLVENKKGKTTQVICSNC).

It belongs to the type IA topoisomerase family. Monomer. Requires Mg(2+) as cofactor.

The catalysed reaction is ATP-independent breakage of single-stranded DNA, followed by passage and rejoining.. Functionally, releases the supercoiling and torsional tension of DNA, which is introduced during the DNA replication and transcription, by transiently cleaving and rejoining one strand of the DNA duplex. Introduces a single-strand break via transesterification at a target site in duplex DNA. The scissile phosphodiester is attacked by the catalytic tyrosine of the enzyme, resulting in the formation of a DNA-(5'-phosphotyrosyl)-enzyme intermediate and the expulsion of a 3'-OH DNA strand. The free DNA strand then undergoes passage around the unbroken strand, thus removing DNA supercoils. Finally, in the religation step, the DNA 3'-OH attacks the covalent intermediate to expel the active-site tyrosine and restore the DNA phosphodiester backbone. The protein is DNA topoisomerase 1 of Staphylococcus aureus (strain N315).